Consider the following 784-residue polypeptide: SWI/SNF complex subunit SWI3C homolog (784 aa).

Residues 1–10 (MPRKASSTSD) show a composition bias toward polar residues. The interval 1–68 (MPRKASSTSD…PEDADDETLA (68 aa)) is disordered. Over residues 24-39 (ASPSPSNRSSAAAAAA) the composition is skewed to low complexity. A compositionally biased stretch (acidic residues) spans 43–66 (DDSDSAAVNEDDDSAVPEDADDET). One can recognise an SWIRM domain in the interval 185 to 284 (HVVPKHSDWF…YLASGSVHRG (100 aa)). The segment at 355–409 (LSESSCSYCLQPLTSLHYQSLKEADIALCSDCFHDARYITGHSSLDFQRIDGDND) adopts a ZZ-type; degenerate zinc-finger fold. Positions 360, 363, 383, and 386 each coordinate Zn(2+). One can recognise an SANT domain in the interval 413–464 (NDGDSWTDQETLLLLEGIEKYNDNWNNIAEHVGTKSKAQCIYHFIRLPVEDG). 2 disordered regions span residues 667-702 (LASP…SMPQ) and 760-784 (GMPN…SSVG). Residues 675–695 (PGGSTSTMSSNPMSMSPRPMG) are compositionally biased toward low complexity.

As to quaternary structure, interacts with LFR. Interacts with NMCP1.

Its subcellular location is the nucleus. It is found in the nucleoplasm. In terms of biological role, component of a multiprotein complex equivalent of the SWI/SNF complex, an ATP-dependent chromatin-remodeling complex, which is required for the positive and negative regulation of gene expression of a large number of genes. It changes chromatin structure by altering DNA-histone contacts within a nucleosome, leading eventually to a change in nucleosome position, thus facilitating or repressing binding of gene-specific transcription factors. May be involved in positive response to drought stress and modulation of root growth through its interaction with NMCP1. The polypeptide is SWI/SNF complex subunit SWI3C homolog (Oryza sativa subsp. japonica (Rice)).